Here is a 117-residue protein sequence, read N- to C-terminus: Hemerythrin subunit alpha (117 aa).

Residues His24, His53, Glu57, His72, His76, His105, and Asp110 each coordinate Fe cation.

It belongs to the hemerythrin family. In terms of assembly, octamer composed of two types of chains: alpha and beta.

Hemerythrin is a respiratory protein in blood cells of certain marine worms. The oxygen-binding site in each chain contains two iron atoms. The protein is Hemerythrin subunit alpha of Lingula anatina (Brachiopod).